The chain runs to 293 residues: MAEGQIIKALSGFYYVLSEGRVFQCRGRGVFRKKKVTPLVGDRVVFQATSETEGYILEIGERQNELVRPPIANVEQAILVFSAVSPDFSAKLLDRFLVLVESKRITPIIVISKIDLLDGESKEEIARYVHDYRRIGYDVIETSAVTKGGLDELALRLRGRVSVVAGQSGVGKSSLLNALRPDLRLKTGDISTHLGRGKHTTRHVELLEVAGGLVADTPGFSALEFNQIELDELPHYFPEFRTYGEGCKFRGCLHIAEPKCAVREAVEAGEIPSYRYDHYVSFVAEMKERKPRY.

The CP-type G domain maps to 63–223; that stretch reads QNELVRPPIA…VADTPGFSAL (161 aa). GTP contacts are provided by residues 112-115 and 166-174; these read SKID and GQSGVGKSS. Zn(2+) contacts are provided by cysteine 247, cysteine 252, histidine 254, and cysteine 260.

The protein belongs to the TRAFAC class YlqF/YawG GTPase family. RsgA subfamily. As to quaternary structure, monomer. Associates with 30S ribosomal subunit, binds 16S rRNA. The cofactor is Zn(2+).

Its subcellular location is the cytoplasm. One of several proteins that assist in the late maturation steps of the functional core of the 30S ribosomal subunit. Helps release RbfA from mature subunits. May play a role in the assembly of ribosomal proteins into the subunit. Circularly permuted GTPase that catalyzes slow GTP hydrolysis, GTPase activity is stimulated by the 30S ribosomal subunit. In Geobacillus kaustophilus (strain HTA426), this protein is Small ribosomal subunit biogenesis GTPase RsgA.